The following is an 857-amino-acid chain: KH domain-containing protein HEN4 (857 aa).

Positions 1–15 (MERNSVKFHAEKRSG) are enriched in basic and acidic residues. The segment at 1-27 (MERNSVKFHAEKRSGAFDPGSGFGSSK) is disordered. KH domains lie at 46–110 (HAAF…KLGA), 149–217 (TVVC…LVSI), 451–521 (DVVF…IMLI), and 541–610 (SITA…IFHI). The segment at 644–755 (SDNPLSIGSH…RGLSDASGGL (112 aa)) is disordered. Polar residues-rich tracts occupy residues 645-665 (DNPL…NSSS) and 673-688 (SFLS…SRSV). A compositionally biased stretch (basic and acidic residues) spans 718–730 (FTMDHSDNSHHLT). Residues 746-755 (RGLSDASGGL) are compositionally biased toward low complexity. The 65-residue stretch at 775–839 (NTTVEIRVPA…DQTQAAQNLL (65 aa)) folds into the KH 5 domain.

As to quaternary structure, interacts with HUA1. Interacts with FLK and PEP.

The protein resides in the nucleus speckle. Functions in floral reproductive organ identity in the third whorl and floral determinacy specification by specifically promoting the processing of AGAMOUS (AG) pre-mRNA. Functions in association with HUA1 and HUA2. The polypeptide is KH domain-containing protein HEN4 (Arabidopsis thaliana (Mouse-ear cress)).